The following is a 303-amino-acid chain: Crk-like protein (303 aa).

Residues 14 to 102 (WYMGPVSRQE…LDTTTLIEPA (89 aa)) enclose the SH2 domain. In terms of domain architecture, SH3 1 spans 123–183 (ENLEYVRTLY…PVPYVEKLVR (61 aa)). Residue Tyr-127 is modified to Phosphotyrosine. The disordered stretch occupies residues 184 to 204 (SSPHGKHGNRNSNSYGIPEPA). Position 207 is a phosphotyrosine (Tyr-207). In terms of domain architecture, SH3 2 spans 235-296 (NGPVFAKAIQ…PFTHVKIFDP (62 aa)).

The protein belongs to the CRK family. In terms of assembly, interacts with INPP5D/SHIP1. Interacts with DOCK2 and EPOR. Interacts with phosphorylated CBLB and IRS4. Interacts with BCAR1/CAS and NEDD9/HEF1.

May mediate the transduction of intracellular signals. In Rattus norvegicus (Rat), this protein is Crk-like protein.